Reading from the N-terminus, the 309-residue chain is Acetyl-coenzyme A carboxylase carboxyl transferase subunit beta (309 aa).

A CoA carboxyltransferase N-terminal domain is found at 29-298 (NSDWTSCCKG…AINSSENETS (270 aa)). Zn(2+) is bound by residues Cys35, Cys36, Cys52, and Cys55.

Belongs to the AccD/PCCB family. As to quaternary structure, acetyl-CoA carboxylase is a heterohexamer composed of biotin carboxyl carrier protein (AccB), biotin carboxylase (AccC) and two subunits each of ACCase subunit alpha (AccA) and ACCase subunit beta (AccD). The cofactor is Zn(2+).

It is found in the cytoplasm. The catalysed reaction is N(6)-carboxybiotinyl-L-lysyl-[protein] + acetyl-CoA = N(6)-biotinyl-L-lysyl-[protein] + malonyl-CoA. It functions in the pathway lipid metabolism; malonyl-CoA biosynthesis; malonyl-CoA from acetyl-CoA: step 1/1. Functionally, component of the acetyl coenzyme A carboxylase (ACC) complex. Biotin carboxylase (BC) catalyzes the carboxylation of biotin on its carrier protein (BCCP) and then the CO(2) group is transferred by the transcarboxylase to acetyl-CoA to form malonyl-CoA. In Pelagibacter ubique (strain HTCC1062), this protein is Acetyl-coenzyme A carboxylase carboxyl transferase subunit beta.